Consider the following 294-residue polypeptide: Farnesyl diphosphate synthase (294 aa).

Isopentenyl diphosphate-binding residues include Lys45, Arg48, and His77. Residues Asp84 and Asp90 each contribute to the Mg(2+) site. Arg95 provides a ligand contact to (2E)-geranyl diphosphate. Position 96 (Arg96) interacts with isopentenyl diphosphate. Lys181, Thr182, and Gln220 together coordinate (2E)-geranyl diphosphate.

The protein belongs to the FPP/GGPP synthase family. The cofactor is Mg(2+).

The protein resides in the cytoplasm. It carries out the reaction isopentenyl diphosphate + (2E)-geranyl diphosphate = (2E,6E)-farnesyl diphosphate + diphosphate. The protein is Farnesyl diphosphate synthase (ispA) of Buchnera aphidicola subsp. Schizaphis graminum (strain Sg).